We begin with the raw amino-acid sequence, 567 residues long: Hexose transporter HXT11 (567 aa).

Positions 1–22 (MSGVNNTSANELSTTMSNSNSA) are enriched in polar residues. Positions 1–45 (MSGVNNTSANELSTTMSNSNSAVGAPSVKTEHGDSKNSLNLDANE) are disordered. Residues 1–56 (MSGVNNTSANELSTTMSNSNSAVGAPSVKTEHGDSKNSLNLDANEPPIDLPQKPLS) are Cytoplasmic-facing. The chain crosses the membrane as a helical span at residues 57 to 77 (AYTTVAILCLMIAFGGFIFGW). Over 78–112 (DTGTISGFVNLSDFIRRFGQKNDKGTYYLSKVRMG) the chain is Extracellular. The N-linked (GlcNAc...) asparagine glycan is linked to N87. Residues 113-133 (LIVSIFNIGCAIGGIVLSKVG) traverse the membrane as a helical segment. Topologically, residues 134–139 (DIYGRR) are cytoplasmic. A helical membrane pass occupies residues 140 to 160 (IGLITVTAIYVVGILIQITSI). The Extracellular portion of the chain corresponds to 161-170 (NKWYQYFIGR). The chain crosses the membrane as a helical span at residues 171 to 191 (IISGLGVGGIAVLSPMLISEV). Topologically, residues 192 to 197 (APKHIR) are cytoplasmic. Residues 198-218 (GTLVQLYQLMGTMGIFLGYCT) traverse the membrane as a helical segment. Topologically, residues 219–232 (NYGTKNYHNATQWR) are extracellular. A glycan (N-linked (GlcNAc...) asparagine) is linked at N227. A helical membrane pass occupies residues 233–253 (VGLGLCFAWATFMVSGMMFVP). Topologically, residues 254–336 (ESPRYLIEVG…IQSLQQLTGD (83 aa)) are cytoplasmic. Residues 337 to 353 (NYFFYYGTTIFKSVGLK) traverse the membrane as a helical segment. Residues 354-359 (DSFQTS) are Extracellular-facing. The chain crosses the membrane as a helical span at residues 360 to 377 (IIIGVVNFFSSFIAVYTI). At 378–384 (ERFGRRT) the chain is on the cytoplasmic side. The chain crosses the membrane as a helical span at residues 385–405 (CLLWGAASMLCCFAVFASVGV). Topologically, residues 406–429 (TKLWPQGSSHQDITSQGAGNCMIV) are extracellular. A helical membrane pass occupies residues 430 to 450 (FTMFFIFSFATTWAGGCYVIV). The Cytoplasmic portion of the chain corresponds to 451 to 467 (SETFPLRVKSRGMAIAT). A helical membrane pass occupies residues 468-488 (AANWMWGFLISFFTPFITGAI). A topological domain (extracellular) is located at residue N489. The helical transmembrane segment at 490–510 (FYYGYVFLGCLVFAYFYVFFF) threads the bilayer. At 511 to 567 (VPETKGLTLEEVNTMWLEGVPAWKSASWVPPERRTADYDADAIDHDNRPIYKRFFSS) the chain is on the cytoplasmic side.

The protein belongs to the major facilitator superfamily. Sugar transporter (TC 2.A.1.1) family.

The protein resides in the membrane. Functionally, probable glucose transporter. The protein is Hexose transporter HXT11 (HXT11) of Saccharomyces cerevisiae (strain ATCC 204508 / S288c) (Baker's yeast).